A 250-amino-acid polypeptide reads, in one-letter code: 5-oxoprolinase subunit A (250 aa).

Belongs to the LamB/PxpA family. Forms a complex composed of PxpA, PxpB and PxpC.

It catalyses the reaction 5-oxo-L-proline + ATP + 2 H2O = L-glutamate + ADP + phosphate + H(+). In terms of biological role, catalyzes the cleavage of 5-oxoproline to form L-glutamate coupled to the hydrolysis of ATP to ADP and inorganic phosphate. This Streptomyces griseus subsp. griseus (strain JCM 4626 / CBS 651.72 / NBRC 13350 / KCC S-0626 / ISP 5235) protein is 5-oxoprolinase subunit A.